The primary structure comprises 302 residues: Phospho-N-acetylmuramoyl-pentapeptide-transferase (302 aa).

The next 9 helical transmembrane spans lie at 1-21 (MIAA…KLFR), 42-62 (GTPT…GMIS), 68-88 (VLLG…LSVV), 123-143 (FFGF…LVIV), 154-174 (GLDG…WFFL), 178-198 (GVSE…LVFN), 204-224 (IFMG…VSVL), 229-249 (FYLV…ILQV), and 279-299 (IVAV…EIFG).

This sequence belongs to the glycosyltransferase 4 family. MraY subfamily. Requires Mg(2+) as cofactor.

It localises to the cell inner membrane. It catalyses the reaction UDP-N-acetyl-alpha-D-muramoyl-L-alanyl-gamma-D-glutamyl-meso-2,6-diaminopimeloyl-D-alanyl-D-alanine + di-trans,octa-cis-undecaprenyl phosphate = di-trans,octa-cis-undecaprenyl diphospho-N-acetyl-alpha-D-muramoyl-L-alanyl-D-glutamyl-meso-2,6-diaminopimeloyl-D-alanyl-D-alanine + UMP. The protein operates within cell wall biogenesis; peptidoglycan biosynthesis. Functionally, catalyzes the initial step of the lipid cycle reactions in the biosynthesis of the cell wall peptidoglycan: transfers peptidoglycan precursor phospho-MurNAc-pentapeptide from UDP-MurNAc-pentapeptide onto the lipid carrier undecaprenyl phosphate, yielding undecaprenyl-pyrophosphoryl-MurNAc-pentapeptide, known as lipid I. The polypeptide is Phospho-N-acetylmuramoyl-pentapeptide-transferase (Thermotoga petrophila (strain ATCC BAA-488 / DSM 13995 / JCM 10881 / RKU-1)).